The primary structure comprises 22 residues: Caerin-3.3 (22 aa).

Lys-22 carries the post-translational modification Lysine amide.

In terms of tissue distribution, expressed by the skin parotoid and/or rostral glands.

It is found in the secreted. Antibacterial peptide, that adopts an alpha helical conformation which can disrupt bacterial membranes. Each caerin displays a different antimicrobial specificity. This chain is Caerin-3.3, found in Ranoidea caerulea (Green tree frog).